The sequence spans 235 residues: (5-formylfuran-3-yl)methyl phosphate synthase (235 aa).

The active-site Schiff-base intermediate with substrate is Lys-27. Lys-85 functions as the Proton acceptor in the catalytic mechanism.

This sequence belongs to the MfnB family.

The enzyme catalyses 2 D-glyceraldehyde 3-phosphate = 4-(hydroxymethyl)-2-furancarboxaldehyde phosphate + phosphate + 2 H2O. The protein operates within cofactor biosynthesis; methanofuran biosynthesis. In terms of biological role, catalyzes the formation of 4-(hydroxymethyl)-2-furancarboxaldehyde phosphate (4-HFC-P) from two molecules of glyceraldehyde-3-P (GA-3-P). This chain is (5-formylfuran-3-yl)methyl phosphate synthase, found in Methanococcus aeolicus (strain ATCC BAA-1280 / DSM 17508 / OCM 812 / Nankai-3).